The following is a 274-amino-acid chain: Cytochrome b-c1 complex subunit Rieske, mitochondrial (274 aa).

The segment at 29–49 (XXXXXXXXTPEPPVLDPKRPI) is disordered. The Mitochondrial matrix portion of the chain corresponds to 79–103 (SHTDIKVPDFSDYRRSEVLDKTKSS). Residues 104 to 140 (RESSDARKVFSYMVTATTAVGVTYAAKSIVTQFISSM) traverse the membrane as a helical segment. Over 141-274 (SASADVLAMS…FLSDDMVVVG (134 aa)) the chain is Mitochondrial intermembrane. The 86-residue stretch at 187–272 (EAAVELSQLR…YEFLSDDMVV (86 aa)) folds into the Rieske domain. [2Fe-2S] cluster-binding residues include Cys217, His219, Cys236, His239, and Ser241. Residues Cys222 and Cys238 are joined by a disulfide bond.

This sequence belongs to the Rieske iron-sulfur protein family. As to quaternary structure, component of the ubiquinol-cytochrome c oxidoreductase (cytochrome b-c1 complex, complex III, CIII), a multisubunit enzyme composed of 11 subunits. The complex is composed of 3 respiratory subunits cytochrome b, cytochrome c1 and Rieske protein UQCRFS1, 2 core protein subunits UQCRC1/QCR1 and UQCRC2/QCR2, and 6 low-molecular weight protein subunits UQCRH/QCR6, UQCRB/QCR7, UQCRQ/QCR8, UQCR10/QCR9, UQCR11/QCR10 and subunit 9, the cleavage product of Rieske protein UQCRFS1. The complex exists as an obligatory dimer and forms supercomplexes (SCs) in the inner mitochondrial membrane with NADH-ubiquinone oxidoreductase (complex I, CI) and cytochrome c oxidase (complex IV, CIV), resulting in different assemblies (supercomplex SCI(1)III(2)IV(1) and megacomplex MCI(2)III(2)IV(2)). Incorporation of the Rieske protein UQCRFS1 is the penultimate step in complex III assembly. Interacts with TTC19, which is involved in the clearance of UQCRFS1 fragments. Component of the ubiquinol-cytochrome c oxidoreductase (cytochrome b-c1 complex, complex III, CIII). Subunit 9 corresponds to the mitochondrial targeting sequence (MTS) of Rieske protein UQCRFS1. It is retained after processing and incorporated inside complex III, where it remains bound to the complex and localizes between the 2 core subunits UQCRC1/QCR1 and UQCRC2/QCR2. It depends on [2Fe-2S] cluster as a cofactor. Proteolytic processing is necessary for the correct insertion of UQCRFS1 in the complex III dimer. Several fragments are generated during UQCRFS1 insertion, most probably due to the endogenous matrix-processing peptidase (MPP) activity of the 2 core protein subunits UQCRC1/QCR1 and UQCRC2/QCR2, which are homologous to the 2 mitochondrial-processing peptidase (MPP) subunits beta-MPP and alpha-MPP respectively. The action of the protease is also necessary for the clearance of the UQCRFS1 fragments.

The protein localises to the mitochondrion inner membrane. It carries out the reaction a quinol + 2 Fe(III)-[cytochrome c](out) = a quinone + 2 Fe(II)-[cytochrome c](out) + 2 H(+)(out). Functionally, component of the ubiquinol-cytochrome c oxidoreductase, a multisubunit transmembrane complex that is part of the mitochondrial electron transport chain which drives oxidative phosphorylation. The respiratory chain contains 3 multisubunit complexes succinate dehydrogenase (complex II, CII), ubiquinol-cytochrome c oxidoreductase (cytochrome b-c1 complex, complex III, CIII) and cytochrome c oxidase (complex IV, CIV), that cooperate to transfer electrons derived from NADH and succinate to molecular oxygen, creating an electrochemical gradient over the inner membrane that drives transmembrane transport and the ATP synthase. The cytochrome b-c1 complex catalyzes electron transfer from ubiquinol to cytochrome c, linking this redox reaction to translocation of protons across the mitochondrial inner membrane, with protons being carried across the membrane as hydrogens on the quinol. In the process called Q cycle, 2 protons are consumed from the matrix, 4 protons are released into the intermembrane space and 2 electrons are passed to cytochrome c. The Rieske protein is a catalytic core subunit containing a [2Fe-2S] iron-sulfur cluster. It cycles between 2 conformational states during catalysis to transfer electrons from the quinol bound in the Q(0) site in cytochrome b to cytochrome c1. Incorporation of UQCRFS1 is the penultimate step in complex III assembly. In terms of biological role, component of the ubiquinol-cytochrome c oxidoreductase (cytochrome b-c1 complex, complex III, CIII). UQCRFS1 undergoes proteolytic processing once it is incorporated in the complex III dimer. One of the fragments, called subunit 9, corresponds to its mitochondrial targeting sequence (MTS). The proteolytic processing is necessary for the correct insertion of UQCRFS1 in the complex III dimer, but the persistence of UQCRFS1-derived fragments may prevent newly imported UQCRFS1 to be processed and assembled into complex III and is detrimental for the complex III structure and function. The polypeptide is Cytochrome b-c1 complex subunit Rieske, mitochondrial (UQCRFS1) (Saimiri sciureus (Common squirrel monkey)).